A 199-amino-acid chain; its full sequence is Recombination protein RecR (199 aa).

A C4-type zinc finger spans residues 58-73; sequence CQTCRILSETDLCSLC. Residues 81–176 form the Toprim domain; sequence GQLCVVEMPS…TTTRIAHGVP (96 aa).

Belongs to the RecR family.

Its function is as follows. May play a role in DNA repair. It seems to be involved in an RecBC-independent recombinational process of DNA repair. It may act with RecF and RecO. The sequence is that of Recombination protein RecR from Nitrosococcus oceani (strain ATCC 19707 / BCRC 17464 / JCM 30415 / NCIMB 11848 / C-107).